A 185-amino-acid polypeptide reads, in one-letter code: ADP-ribosylation factor (185 aa).

Glycine 2 carries the N-myristoyl glycine lipid modification. GTP contacts are provided by residues 27–34, 70–74, and 129–132; these read GLDAAGKT, DVGGQ, and NKQD.

Belongs to the small GTPase superfamily. Arf family.

It is found in the golgi apparatus. GTP-binding protein involved in protein trafficking; may modulate vesicle budding and uncoating within the Golgi apparatus. This is ADP-ribosylation factor from Neurospora crassa (strain ATCC 24698 / 74-OR23-1A / CBS 708.71 / DSM 1257 / FGSC 987).